The sequence spans 246 residues: Complement C1q tumor necrosis factor-related protein 3 (246 aa).

A signal peptide spans methionine 1–cysteine 22. Residues glycine 51–proline 113 form the Collagen-like domain. The disordered stretch occupies residues glutamine 53–proline 110. Pro residues predominate over residues proline 55 to isoleucine 64. Residues proline 65–asparagine 74 show a composition bias toward low complexity. The N-linked (GlcNAc...) asparagine glycan is linked to asparagine 70. Basic and acidic residues predominate over residues glutamate 80–lysine 107. A C1q domain is found at proline 113–lysine 246.

Glycosylated on Asn-70. As to expression, expressed in colon and small intestine.

It is found in the secreted. The sequence is that of Complement C1q tumor necrosis factor-related protein 3 (C1QTNF3) from Homo sapiens (Human).